The primary structure comprises 1342 residues: Subtilisin-like protease 2 (1342 aa).

The signal sequence occupies residues 1–18 (MLNIIYVVSLILIKFIFY). Residues 19–687 (KECNNNNNYY…KLYNNKYSFL (669 aa)) constitute a propeptide, inhibition peptide. Disordered regions lie at residues 85–111 (EKKTKGEENEIEKKKENDLEEKKENEI) and 143–171 (ADVSNNDNSGHEENNKHKLNKKNSSNYKN). N165, N343, N451, N455, and N493 each carry an N-linked (GlcNAc...) asparagine glycan. A disordered region spans residues 415–474 (KKSKKEKENTQQKGGNNPNVDINILNNNNNNNNNNNNNSNNNSNSMNDEEINYNNNNNKE). Residues 430–474 (NNPNVDINILNNNNNNNNNNNNNSNNNSNSMNDEEINYNNNNNKE) show a composition bias toward low complexity. The disordered stretch occupies residues 500-531 (IYHNKNDNSYKNKKEGTGKNNDNNDPNNNNNK). Residues 503–516 (NKNDNSYKNKKEGT) are compositionally biased toward basic and acidic residues. Residues 518–531 (KNNDNNDPNNNNNK) are compositionally biased toward low complexity. 3 N-linked (GlcNAc...) asparagine glycosylation sites follow: N551, N642, and N729. The Extracellular portion of the chain corresponds to 688-1137 (NKFLNIEPLI…LYNLYEYDSH (450 aa)). The region spanning 727-1020 (TWNLSIIRVF…DSLVNAEGAV (294 aa)) is the Peptidase S8 domain. Catalysis depends on charge relay system residues D755 and H798. N-linked (GlcNAc...) asparagine glycosylation is found at N821, N857, N893, and N951. Catalysis depends on S961, which acts as the Charge relay system. N1010 and N1106 each carry an N-linked (GlcNAc...) asparagine glycan. The chain crosses the membrane as a helical span at residues 1138–1158 (YLLASVILFFLALLSIFVGMI). At 1159-1342 (YMKSRKHSDK…MNQLDDMFMK (184 aa)) the chain is on the cytoplasmic side.

Belongs to the peptidase S8 family. Proteolytically cleaved at the N-terminus to generate a 74kDa intermediate which is further processed into a 72kDa form. The first maturation cleavage is autocatalytic, occurs in the ER and is necessary for the subsequent SUB2 trafficking to the microneme. The second cleavage may be mediated by PMX/plasmepsin X.

Its subcellular location is the cell membrane. The protein resides in the cytoplasmic vesicle. The protein localises to the secretory vesicle. It localises to the microneme membrane. The enzyme catalyses Hydrolysis of proteins with broad specificity for peptide bonds, and a preference for a large uncharged residue in P1. Hydrolyzes peptide amides.. With respect to regulation, activation may be calcium-dependent. Inhibited by the non-covalent interaction with the cleaved propeptide. Its function is as follows. Serine protease which plays an essential role in the shedding of AMA1, MSP1 and MSP7 from the surface of the invading merozoite; this step is essential for productive invasion and the release of the adhesion between the erythrocyte and the merozoite. May cleave TRAMP/PTTRAMP, thereby shedding TRAMP from the merozoite surface during erythrocyte invasion. In Plasmodium falciparum, this protein is Subtilisin-like protease 2.